We begin with the raw amino-acid sequence, 362 residues long: Chorismate synthase (362 aa).

Arginine 47 is an NADP(+) binding site. Residues arginine 124–serine 126, glycine 286, lysine 301–threonine 305, and arginine 327 contribute to the FMN site.

Belongs to the chorismate synthase family. In terms of assembly, homotetramer. The cofactor is FMNH2.

It catalyses the reaction 5-O-(1-carboxyvinyl)-3-phosphoshikimate = chorismate + phosphate. It participates in metabolic intermediate biosynthesis; chorismate biosynthesis; chorismate from D-erythrose 4-phosphate and phosphoenolpyruvate: step 7/7. Its function is as follows. Catalyzes the anti-1,4-elimination of the C-3 phosphate and the C-6 proR hydrogen from 5-enolpyruvylshikimate-3-phosphate (EPSP) to yield chorismate, which is the branch point compound that serves as the starting substrate for the three terminal pathways of aromatic amino acid biosynthesis. This reaction introduces a second double bond into the aromatic ring system. The chain is Chorismate synthase from Prochlorococcus marinus (strain MIT 9303).